The following is a 210-amino-acid chain: Urease accessory protein UreF (210 aa).

It belongs to the UreF family. In terms of assembly, ureD, UreF and UreG form a complex that acts as a GTP-hydrolysis-dependent molecular chaperone, activating the urease apoprotein by helping to assemble the nickel containing metallocenter of UreC. The UreE protein probably delivers the nickel.

Its subcellular location is the cytoplasm. In terms of biological role, required for maturation of urease via the functional incorporation of the urease nickel metallocenter. This Cereibacter sphaeroides (strain ATCC 17029 / ATH 2.4.9) (Rhodobacter sphaeroides) protein is Urease accessory protein UreF.